The following is a 157-amino-acid chain: Protein snakeskin (157 aa).

The Cytoplasmic portion of the chain corresponds to 2–6 (VSVQT). Residues 7 to 27 (IATIVVKTFKIVLNIIILVLY) form a helical membrane-spanning segment. Topologically, residues 28 to 53 (RTGYNGEFLGVGGTWNLNEEKNPDAE) are extracellular. The helical transmembrane segment at 54-74 (IVASGVIVGYLIYTLVQIVTF) threads the bilayer. Residues 75–87 (LFGTTEHKRALSE) lie on the Cytoplasmic side of the membrane. The helical transmembrane segment at 88-108 (IVMNFVGVFLWIAVGAVALHY) threads the bilayer. Residues 109–130 (WGGYQGEHQFQFVFAEKQVGLA) lie on the Extracellular side of the membrane. Residues 131–151 (VGALCVINGAIYLLDTALSVI) traverse the membrane as a helical segment. Residues 152–157 (HFTKEM) lie on the Cytoplasmic side of the membrane.

As to expression, expressed in midgut epithelium (at protein level).

Its subcellular location is the apicolateral cell membrane. It localises to the cell junction. The protein localises to the septate junction. Its function is as follows. Required for assembly of smooth septate junctions (sSJs). May be important for barrier function of the midgut epithelium. The sequence is that of Protein snakeskin from Bombyx mori (Silk moth).